We begin with the raw amino-acid sequence, 300 residues long: Ribonuclease HIII (300 aa).

The RNase H type-2 domain occupies 83-300 (IPIIGSDEVG…THKAQALLTK (218 aa)). The a divalent metal cation site is built by Asp89, Glu90, and Asp194.

This sequence belongs to the RNase HII family. RnhC subfamily. Mn(2+) serves as cofactor. Mg(2+) is required as a cofactor.

The protein localises to the cytoplasm. It carries out the reaction Endonucleolytic cleavage to 5'-phosphomonoester.. Its function is as follows. Endonuclease that specifically degrades the RNA of RNA-DNA hybrids. The polypeptide is Ribonuclease HIII (Streptococcus pyogenes serotype M5 (strain Manfredo)).